A 244-amino-acid chain; its full sequence is Orotidine 5'-phosphate decarboxylase (244 aa).

Substrate-binding positions include D10, K32, 59–68, T122, R184, Q193, G213, and R214; that span reads DLKLHDIPNT. K61 acts as the Proton donor in catalysis.

Belongs to the OMP decarboxylase family. Type 1 subfamily. As to quaternary structure, homodimer.

It catalyses the reaction orotidine 5'-phosphate + H(+) = UMP + CO2. Its pathway is pyrimidine metabolism; UMP biosynthesis via de novo pathway; UMP from orotate: step 2/2. Catalyzes the decarboxylation of orotidine 5'-monophosphate (OMP) to uridine 5'-monophosphate (UMP). In Bacillus caldolyticus, this protein is Orotidine 5'-phosphate decarboxylase.